Reading from the N-terminus, the 463-residue chain is Chaperone SurA (463 aa).

The first 25 residues, 1–25, serve as a signal peptide directing secretion; sequence MTKPFSVVLASLLAITSTISPLASA. 2 consecutive PpiC domains span residues 174-276 and 289-388; these read GSKY…KLME and VTEY…QRVG. Disordered stretches follow at residues 329-348 and 434-463; these read ATAK…GDLG and GDRA…KPTR. The span at 439 to 452 shows a compositional bias: low complexity; sequence NNATAAPAKSADPA. Pro residues predominate over residues 453–463; that stretch reads LPAPPPAKPTR.

The protein localises to the periplasm. The catalysed reaction is [protein]-peptidylproline (omega=180) = [protein]-peptidylproline (omega=0). In terms of biological role, chaperone involved in the correct folding and assembly of outer membrane proteins. Recognizes specific patterns of aromatic residues and the orientation of their side chains, which are found more frequently in integral outer membrane proteins. May act in both early periplasmic and late outer membrane-associated steps of protein maturation. The chain is Chaperone SurA from Xanthomonas oryzae pv. oryzae (strain MAFF 311018).